A 189-amino-acid polypeptide reads, in one-letter code: UPF0301 protein PA14_05290 (189 aa).

The protein belongs to the UPF0301 (AlgH) family.

This Pseudomonas aeruginosa (strain UCBPP-PA14) protein is UPF0301 protein PA14_05290.